A 382-amino-acid chain; its full sequence is Ribosomal RNA large subunit methyltransferase G (382 aa).

Belongs to the methyltransferase superfamily. RlmG family.

The protein localises to the cytoplasm. The enzyme catalyses guanosine(1835) in 23S rRNA + S-adenosyl-L-methionine = N(2)-methylguanosine(1835) in 23S rRNA + S-adenosyl-L-homocysteine + H(+). Functionally, specifically methylates the guanine in position 1835 (m2G1835) of 23S rRNA. In Aliivibrio fischeri (strain MJ11) (Vibrio fischeri), this protein is Ribosomal RNA large subunit methyltransferase G.